The primary structure comprises 673 residues: B3 domain-containing protein Os01g0905400 (673 aa).

The span at 1–34 shows a compositional bias: basic and acidic residues; sequence MVELIKVPKIEQEEGNADSHGKEKADVVHEEKTE. Residues 1–44 form a disordered region; that stretch reads MVELIKVPKIEQEEGNADSHGKEKADVVHEEKTEKVKRRRKRVS. The TF-B3 1 DNA-binding region spans 79–172; it reads LPSFFKIMVG…VFTVQIFAIS (94 aa). The interval 315–337 is disordered; sequence PSFSYPESSNVMTADKESERSHQ. Residues 328–337 show a composition bias toward basic and acidic residues; that stretch reads ADKESERSHQ. The TF-B3 2 DNA-binding region spans 576-671; that stretch reads SKKFCITIPP…ELSFQVLVPN (96 aa).

It is found in the nucleus. This is B3 domain-containing protein Os01g0905400 from Oryza sativa subsp. japonica (Rice).